We begin with the raw amino-acid sequence, 2898 residues long: Pericentrin (2898 aa).

The interval 1–117 (MEDEQEQRRR…QPPPPQTAHS (117 aa)) is disordered. A compositionally biased stretch (basic residues) spans 34-44 (SKKKTAKRKGS). At Ser44 the chain carries Phosphoserine. Coiled-coil stretches lie at residues 127–343 (LNNM…IRLL) and 382–434 (AQQQ…DSLE). The interval 429 to 460 (REDSLESTEISSSCVLPEETSGREGKEPPDPL) is disordered. Residues 448–457 (TSGREGKEPP) show a composition bias toward basic and acidic residues. Coiled-coil stretches lie at residues 468–527 (KVQE…LREK), 611–696 (CALQ…LETH), 727–787 (VADV…SLRM), and 872–939 (SQDQ…LRRL). Ser1022 is modified (phosphoserine). 3 coiled-coil regions span residues 1069–1383 (EREF…QENM), 1429–1482 (NEVV…SLMG), and 1529–1593 (QLLA…AKEA). Ser1437 carries the phosphoserine modification. Disordered stretches follow at residues 1745-1786 (VASR…DDVL), 1815-1880 (TQEK…PLTP), and 1958-1979 (TSPS…GPDI). 2 stretches are compositionally biased toward polar residues: residues 1747 to 1766 (SRDT…SENG) and 1817 to 1834 (EKLT…SGHS). Residues 1801–1822 (NQDLLVQVEMPDFPTQEKLTSQ) form an interaction with CDK5RAP2 region. Residues Ser1828, Ser1859, Ser1860, and Ser1959 each carry the phosphoserine modification. The segment covering 1963–1976 (ELARRSDGSRKSDG) has biased composition (basic and acidic residues). Phosphoserine is present on Ser1987. Polar residues predominate over residues 2046–2055 (SESQDPSSAL). The interval 2046 to 2088 (SESQDPSSALNKGEPRDPLDGFPRDSQALSEVTTDKGEKESLE) is disordered. 2 stretches are compositionally biased toward basic and acidic residues: residues 2058–2068 (GEPRDPLDGFP) and 2078–2088 (TTDKGEKESLE). Ser2128 carries the phosphoserine modification. Coiled-coil stretches lie at residues 2211 to 2403 (KVEQ…EALQ) and 2429 to 2590 (HALL…ELSM). Disordered regions lie at residues 2509–2532 (VSGG…QFQE) and 2653–2684 (NRQS…QTTS). The tract at residues 2545 to 2810 (LCAAGLLTSF…SQRQRSPSGP (266 aa)) is interaction with NEK2. Polar residues predominate over residues 2653 to 2671 (NRQSKSSLKQDGTDLQSSL). Positions 2758 to 2771 (KFRTAVRVVIAVLR) are calmodulin-binding. The segment at 2787 to 2898 (ALVHPKSTRH…QKSCHQKIKQ (112 aa)) is disordered. Positions 2792-2802 (KSTRHGHRTSQ) are enriched in basic residues. Residues 2845–2860 (TSTPSSRLERSLTASQ) show a composition bias toward polar residues. The segment covering 2861-2874 (DPEHSLTEYIHHLE) has biased composition (basic and acidic residues). Ser2865 is modified (phosphoserine).

In terms of assembly, interacts with DISC1 and PCM1. Binds calmodulin. Interacts with CEP131. Interacts with CDK5RAP2; the interaction is leading to centrosomal localization of PCNT and CDK5RAP2. Interacts with CHD3. Interacts with CHD4; the interaction regulates centrosome integrity. Interacts with NEK2. Interacts with CCDC13. Interacts with CEP68. Interacts with ATF5; the ATF5:PCNT:polyglutamylated tubulin (PGT) tripartite unites the mother centriole and the pericentriolar material (PCM) in the centrosome. Cleaved during mitotis which leads to removal of CDK5RAP2 from the centrosome and promotes centriole disengagement and subsequent centriole separation. The C-terminal fragment is rapidly degraded following cleavage. In terms of processing, ubiquitinated by TRIM43; leading to proteasomal degradation. As to expression, expressed in heart and lung (at protein level). Expressed in kidney, thymus, liver, brain, muscle, testis, spleen, lung and heart.

Its subcellular location is the cytoplasm. It localises to the cytoskeleton. The protein resides in the microtubule organizing center. The protein localises to the centrosome. Integral component of the filamentous matrix of the centrosome involved in the initial establishment of organized microtubule arrays in both mitosis and meiosis. Plays a role, together with DISC1, in the microtubule network formation. Is an integral component of the pericentriolar material (PCM). May play an important role in preventing premature centrosome splitting during interphase by inhibiting NEK2 kinase activity at the centrosome. This is Pericentrin (Pcnt) from Mus musculus (Mouse).